The primary structure comprises 406 residues: uncharacterized protein (406 aa).

It belongs to the mycobacterial PPE family.

This is an uncharacterized protein from Mycobacterium tuberculosis (strain CDC 1551 / Oshkosh).